Consider the following 296-residue polypeptide: Peptide transport system permease protein SapC (296 aa).

Topologically, residues 1 to 28 are cytoplasmic; that stretch reads MPYDSVYSEKRPPGTLRTAWRKFYSDAS. A helical transmembrane segment spans residues 29–49; it reads AMVGLYGCAGLAVLCIFGGWF. The Periplasmic segment spans residues 50-98; that stretch reads APYGIDQQFLGYQLLPPSWSRYGEVSFFLGTDDLGRDVLSRLLSGAAPT. A helical membrane pass occupies residues 99-119; sequence VGGAFVVTLAATICGLVLGTF. The 186-residue stretch at 99–284 folds into the ABC transmembrane type-1 domain; sequence VGGAFVVTLA…ISVLLVNLLG (186 aa). The Cytoplasmic segment spans residues 120–133; the sequence is AGATHGLRSAVLNH. The helical transmembrane segment at 134–154 threads the bilayer; that stretch reads ILDTLLAIPSLLLAIIVVAFA. The Periplasmic segment spans residues 155 to 196; it reads GPSLSHAMFAVWLALLPRMVRSIYSMVHDELEKEYVIAARLD. A helical transmembrane segment spans residues 197 to 217; it reads GASTLNILWFAVMPNITAGLV. Residues 218–222 lie on the Cytoplasmic side of the membrane; that stretch reads TEITR. A helical transmembrane segment spans residues 223–243; sequence ALSMAILDIAALGFLDLGAQL. Topologically, residues 244 to 257 are periplasmic; the sequence is PSPEWGAMLGDALE. A helical membrane pass occupies residues 258-278; it reads LIYVAPWTVMLPGAAIMISVL. The Cytoplasmic segment spans residues 279-296; that stretch reads LVNLLGDGVRRAIIAGVE.

The protein belongs to the binding-protein-dependent transport system permease family. OppBC subfamily.

It localises to the cell inner membrane. Functionally, involved in a peptide intake transport system that plays a role in the resistance to antimicrobial peptides. The sequence is that of Peptide transport system permease protein SapC (sapC) from Escherichia coli O6:H1 (strain CFT073 / ATCC 700928 / UPEC).